Here is a 79-residue protein sequence, read N- to C-terminus: Darcynin (79 aa).

The protein belongs to the darcynin family.

In Chromobacterium violaceum (strain ATCC 12472 / DSM 30191 / JCM 1249 / CCUG 213 / NBRC 12614 / NCIMB 9131 / NCTC 9757 / MK), this protein is Darcynin.